The sequence spans 376 residues: Chaperone protein DnaJ (376 aa).

The region spanning 5–70 (DYYEVLGVAR…NKRRAYDAHG (66 aa)) is the J domain. The CR-type zinc-finger motif lies at 132-209 (GIERRIEIPT…CHGAGRVEEN (78 aa)). C145, C148, C161, C164, C183, C186, C197, and C200 together coordinate Zn(2+). CXXCXGXG motif repeat units follow at residues 145-152 (CVSCHGSG), 161-168 (CGTCHGRG), 183-190 (CPHCDGRG), and 197-204 (CKTCHGAG).

Belongs to the DnaJ family. As to quaternary structure, homodimer. Zn(2+) serves as cofactor.

It is found in the cytoplasm. Participates actively in the response to hyperosmotic and heat shock by preventing the aggregation of stress-denatured proteins and by disaggregating proteins, also in an autonomous, DnaK-independent fashion. Unfolded proteins bind initially to DnaJ; upon interaction with the DnaJ-bound protein, DnaK hydrolyzes its bound ATP, resulting in the formation of a stable complex. GrpE releases ADP from DnaK; ATP binding to DnaK triggers the release of the substrate protein, thus completing the reaction cycle. Several rounds of ATP-dependent interactions between DnaJ, DnaK and GrpE are required for fully efficient folding. Also involved, together with DnaK and GrpE, in the DNA replication of plasmids through activation of initiation proteins. The chain is Chaperone protein DnaJ from Xanthomonas oryzae pv. oryzae (strain PXO99A).